A 117-amino-acid chain; its full sequence is Fluoride-specific ion channel FluC 2 (117 aa).

The next 4 membrane-spanning stretches (helical) occupy residues 4-24, 31-51, 59-79, and 94-114; these read FLIGIGGACGSIVRYKIGDII, KFPWGTFIINITGAFLLGIIT, LSMILADGFLGAYTTFSTFMY, and LIYILSSIIIGILGFYMGEFI. Na(+) is bound by residues Gly-69 and Thr-72.

This sequence belongs to the fluoride channel Fluc/FEX (TC 1.A.43) family.

The protein localises to the cell membrane. It catalyses the reaction fluoride(in) = fluoride(out). With respect to regulation, na(+) is not transported, but it plays an essential structural role and its presence is essential for fluoride channel function. Functionally, fluoride-specific ion channel. Important for reducing fluoride concentration in the cell, thus reducing its toxicity. The polypeptide is Fluoride-specific ion channel FluC 2 (Clostridium acetobutylicum (strain ATCC 824 / DSM 792 / JCM 1419 / IAM 19013 / LMG 5710 / NBRC 13948 / NRRL B-527 / VKM B-1787 / 2291 / W)).